The chain runs to 282 residues: Protein N-terminal and lysine N-methyltransferase efm7 (282 aa).

Over residues 1 to 13 the composition is skewed to basic and acidic residues; it reads MSKPEEVVNHVPE. Residues 1 to 32 form a disordered region; the sequence is MSKPEEVVNHVPEDEGSDIEAGGLFEDPPDFY. S-adenosyl-L-methionine-binding positions include W67, 93-95, D115, W152, and A179; that span reads GAA.

The protein belongs to the class I-like SAM-binding methyltransferase superfamily. EFM7 family.

It localises to the cytoplasm. In terms of biological role, S-adenosyl-L-methionine-dependent protein methyltransferase that trimethylates the N-terminal glycine 'Gly-2' of elongation factor 1-alpha, before also catalyzing the mono- and dimethylation of 'Lys-3'. This Neurospora crassa (strain ATCC 24698 / 74-OR23-1A / CBS 708.71 / DSM 1257 / FGSC 987) protein is Protein N-terminal and lysine N-methyltransferase efm7 (nnt-1).